Consider the following 532-residue polypeptide: MGIISHSIVQCGKWQAGPARRQVVFRVHRRCFKMSEALRHLKNGETDLSSLPSGLDSIPRRIHTARGVDDSFSYRHPVLPQVVVLSDAFCVCLAVVACIAWQRIYDTPDELSGALLLANIMAAGAFFLFPKNVPLLDIPDITKVSVQIRYLLPPVAFGEVVFCTVLVMLSWPFGVTVRMGMEWLTFVVAILFVERCVGTYILHTPTMTRRLARKVAIIGSGSEATQMATRINTRMQRMFRLVGTFDDQGGDSDGTVEELVLRAREDHIDAVIICFPPACGQQHVMDVLWRLRGVLADVYVVPSLMTEDCHGWPVERFGPFSLTVLQRRPLSEWDMLEKRAFDLTASVLLLLALAPLLTLVALAIKLDSRGPVLFCQPRQGFNNRYFNVFKFRSMYTDMSDLDAARQTSRTDPRVTRIGRWIRRLSIDELPQLFNVLRGEMSLVGPRPHAPQTRAGGQLLHEAMEEYVARHRVQPGITGWAQINGSRGELVTRDDLCRRVVLDLEYIRAWSIWLDIKIIFLTIKREIFSRNAF.

5 helical membrane passes run 81–101 (QVVV…CIAW), 110–130 (ELSG…FLFP), 155–175 (VAFG…PFGV), 183–203 (WLTF…YILH), and 344–364 (TASV…ALAI).

This sequence belongs to the bacterial sugar transferase family.

Its subcellular location is the membrane. The catalysed reaction is di-trans,octa-cis-undecaprenyl phosphate + UDP-alpha-D-glucose = alpha-D-glucosyl di-trans,octa-cis-undecaprenyl diphosphate + UMP. Functionally, involved in the biosynthesis of the exopolysaccharide acetan, a water-soluble polysaccharide involved in production of bacterial cellulose (BC). This chain is Undecaprenyl-phosphate glucose phosphotransferase (aceA), found in Komagataeibacter xylinus (Gluconacetobacter xylinus).